The sequence spans 569 residues: Urease subunit alpha (569 aa).

In terms of domain architecture, Urease spans 131-569 (GGIDTHIHFI…LPLAQRYLLL (439 aa)). His-136, His-138, and Lys-219 together coordinate Ni(2+). Lys-219 is modified (N6-carboxylysine). Residue His-221 participates in substrate binding. Positions 248 and 274 each coordinate Ni(2+). Catalysis depends on His-322, which acts as the Proton donor. Asp-362 is a Ni(2+) binding site.

This sequence belongs to the metallo-dependent hydrolases superfamily. Urease alpha subunit family. In terms of assembly, heterotrimer of UreA (gamma), UreB (beta) and UreC (alpha) subunits. Three heterotrimers associate to form the active enzyme. Requires Ni cation as cofactor. Carboxylation allows a single lysine to coordinate two nickel ions.

It localises to the cytoplasm. The enzyme catalyses urea + 2 H2O + H(+) = hydrogencarbonate + 2 NH4(+). The protein operates within nitrogen metabolism; urea degradation; CO(2) and NH(3) from urea (urease route): step 1/1. The protein is Urease subunit alpha of Synechococcus sp. (strain CC9605).